The sequence spans 55 residues: Trypsin inhibitor (55 aa).

The 55-residue stretch at 1–55 folds into the Kazal-like domain; it reads AHMDCTEFNPLCRCNKMLGDLICAVIGDAKEEHRNMCALCCEHPGGFEYSNGPCE. Cystine bridges form between Cys5–Cys40, Cys12–Cys41, Cys14–Cys37, and Cys23–Cys54.

It is found in the secreted. In terms of biological role, potent inhibitor of trypsin. This chain is Trypsin inhibitor, found in Halocynthia roretzi (Sea squirt).